The chain runs to 43 residues: Cytochrome b559 subunit beta (43 aa).

A helical membrane pass occupies residues 18 to 34; it reads WLAIHGLAIPTVFFLGG. Histidine 22 provides a ligand contact to heme.

The protein belongs to the PsbE/PsbF family. In terms of assembly, heterodimer of an alpha subunit and a beta subunit. PSII is composed of 1 copy each of membrane proteins PsbA, PsbB, PsbC, PsbD, PsbE, PsbF, PsbH, PsbI, PsbJ, PsbK, PsbL, PsbM, PsbT, PsbX, PsbY, PsbZ, Psb30/Ycf12, at least 3 peripheral proteins of the oxygen-evolving complex and a large number of cofactors. It forms dimeric complexes. Requires heme b as cofactor.

It localises to the plastid. It is found in the chloroplast thylakoid membrane. Its function is as follows. This b-type cytochrome is tightly associated with the reaction center of photosystem II (PSII). PSII is a light-driven water:plastoquinone oxidoreductase that uses light energy to abstract electrons from H(2)O, generating O(2) and a proton gradient subsequently used for ATP formation. It consists of a core antenna complex that captures photons, and an electron transfer chain that converts photonic excitation into a charge separation. The chain is Cytochrome b559 subunit beta from Phaeodactylum tricornutum (strain CCAP 1055/1).